Consider the following 298-residue polypeptide: Epimerase family protein SSP1921 (298 aa).

Belongs to the NAD(P)-dependent epimerase/dehydratase family. SDR39U1 subfamily.

This Staphylococcus saprophyticus subsp. saprophyticus (strain ATCC 15305 / DSM 20229 / NCIMB 8711 / NCTC 7292 / S-41) protein is Epimerase family protein SSP1921.